The chain runs to 378 residues: Apoptosis-inducing factor 1 (378 aa).

A helical transmembrane segment spans residues 7 to 25 (NIVVVGAGVFGVSVANHLY). Residues 12–16 (GAGVF), Arg-51, Lys-56, and Asp-283 each bind FAD.

It belongs to the FAD-dependent oxidoreductase family. The cofactor is FAD.

It localises to the mitochondrion outer membrane. Its subcellular location is the nucleus. In terms of biological role, putative FAD-dependent oxidoreductase involved in the resistance to cercosporin and other singlet oxygen-generating photosensitizers. Translocates from mitochondria to the nucleus under apoptotic conditions, where it degrades DNA and induces apoptosis. This is Apoptosis-inducing factor 1 (AIF1) from Saccharomyces cerevisiae (strain ATCC 204508 / S288c) (Baker's yeast).